The primary structure comprises 51 residues: MPIRDPEKLQLALEHHFKVKICRRCNARNPWNAERCRRCKSRDLRPKRYKK.

It belongs to the eukaryotic ribosomal protein eL40 family.

This Thermofilum pendens (strain DSM 2475 / Hrk 5) protein is Large ribosomal subunit protein eL40.